Here is a 101-residue protein sequence, read N- to C-terminus: Large ribosomal subunit protein eL31 (101 aa).

Belongs to the eukaryotic ribosomal protein eL31 family.

This chain is Large ribosomal subunit protein eL31, found in Ignicoccus hospitalis (strain KIN4/I / DSM 18386 / JCM 14125).